The chain runs to 199 residues: NADH-quinone oxidoreductase subunit C (199 aa).

This sequence belongs to the complex I 30 kDa subunit family. As to quaternary structure, NDH-1 is composed of 14 different subunits. Subunits NuoB, C, D, E, F, and G constitute the peripheral sector of the complex.

The protein localises to the cell inner membrane. It carries out the reaction a quinone + NADH + 5 H(+)(in) = a quinol + NAD(+) + 4 H(+)(out). In terms of biological role, NDH-1 shuttles electrons from NADH, via FMN and iron-sulfur (Fe-S) centers, to quinones in the respiratory chain. The immediate electron acceptor for the enzyme in this species is believed to be ubiquinone. Couples the redox reaction to proton translocation (for every two electrons transferred, four hydrogen ions are translocated across the cytoplasmic membrane), and thus conserves the redox energy in a proton gradient. This chain is NADH-quinone oxidoreductase subunit C, found in Cupriavidus taiwanensis (strain DSM 17343 / BCRC 17206 / CCUG 44338 / CIP 107171 / LMG 19424 / R1) (Ralstonia taiwanensis (strain LMG 19424)).